Reading from the N-terminus, the 201-residue chain is 3-isopropylmalate dehydratase small subunit (201 aa).

It belongs to the LeuD family. LeuD type 1 subfamily. As to quaternary structure, heterodimer of LeuC and LeuD.

It carries out the reaction (2R,3S)-3-isopropylmalate = (2S)-2-isopropylmalate. The protein operates within amino-acid biosynthesis; L-leucine biosynthesis; L-leucine from 3-methyl-2-oxobutanoate: step 2/4. Catalyzes the isomerization between 2-isopropylmalate and 3-isopropylmalate, via the formation of 2-isopropylmaleate. This is 3-isopropylmalate dehydratase small subunit from Allorhizobium ampelinum (strain ATCC BAA-846 / DSM 112012 / S4) (Agrobacterium vitis (strain S4)).